We begin with the raw amino-acid sequence, 299 residues long: Taste receptor type 2 member 4 (299 aa).

The Extracellular segment spans residues M1–A9. A helical membrane pass occupies residues I10–V30. The Cytoplasmic portion of the chain corresponds to N31–R46. A helical transmembrane segment spans residues I47 to I67. The Extracellular segment spans residues Y68–S81. The chain crosses the membrane as a helical span at residues A82–L102. Residues N103–R131 are Cytoplasmic-facing. A helical transmembrane segment spans residues L132–Q152. Topologically, residues A153–E172 are extracellular. N-linked (GlcNAc...) asparagine glycans are attached at residues N164, N165, and N169. Residues G173–V193 traverse the membrane as a helical segment. At T194–K230 the chain is on the cytoplasmic side. The chain crosses the membrane as a helical span at residues L231–L251. Over P252–K262 the chain is Extracellular. Residues S263–T283 traverse the membrane as a helical segment. Over H284–K299 the chain is Cytoplasmic.

This sequence belongs to the G-protein coupled receptor T2R family.

The protein localises to the membrane. The protein resides in the cell projection. It localises to the cilium membrane. Functionally, gustducin-coupled receptor implicated in the perception of bitter compounds in the oral cavity and the gastrointestinal tract. Signals through PLCB2 and the calcium-regulated cation channel TRPM5. In airway epithelial cells, binding of denatonium increases the intracellular calcium ion concentration and stimulates ciliary beat frequency. In Papio hamadryas (Hamadryas baboon), this protein is Taste receptor type 2 member 4 (TAS2R4).